The chain runs to 394 residues: Elongation factor Tu-A (394 aa).

Residues 10-204 (KPHVNVGTIG…ALDTYIPEPE (195 aa)) form the tr-type G domain. The G1 stretch occupies residues 19–26 (GHVDHGKT). 19–26 (GHVDHGKT) contributes to the GTP binding site. Position 26 (threonine 26) interacts with Mg(2+). The tract at residues 60 to 64 (GITIN) is G2. Residues 81 to 84 (DCPG) form a G3 region. Residues 81-85 (DCPGH) and 136-139 (NKCD) each bind GTP. Residues 136–139 (NKCD) are G4. The tract at residues 174-176 (SAL) is G5.

This sequence belongs to the TRAFAC class translation factor GTPase superfamily. Classic translation factor GTPase family. EF-Tu/EF-1A subfamily. Monomer.

The protein resides in the cytoplasm. It catalyses the reaction GTP + H2O = GDP + phosphate + H(+). In terms of biological role, GTP hydrolase that promotes the GTP-dependent binding of aminoacyl-tRNA to the A-site of ribosomes during protein biosynthesis. In Vibrio cholerae serotype O1 (strain ATCC 39315 / El Tor Inaba N16961), this protein is Elongation factor Tu-A.